The following is a 53-amino-acid chain: UPF0391 membrane protein gsr2640 (53 aa).

2 helical membrane-spanning segments follow: residues leucine 4 to valine 24 and tryptophan 32 to glycine 49.

Belongs to the UPF0391 family.

The protein localises to the cell membrane. The sequence is that of UPF0391 membrane protein gsr2640 from Gloeobacter violaceus (strain ATCC 29082 / PCC 7421).